We begin with the raw amino-acid sequence, 173 residues long: Globin, cuticular isoform (173 aa).

The signal sequence occupies residues 1–16; that stretch reads MLWFVAVCFAIASVSA. The region spanning 17–166 is the Globin domain; sequence MSPADVKKHT…FNSEAQHQLE (150 aa). His-113 provides a ligand contact to heme b.

This sequence belongs to the globin family. In terms of tissue distribution, expressed only by adult nematodes in the gut.

It is found in the secreted. It localises to the extracellular space. This chain is Globin, cuticular isoform (GLBC), found in Nippostrongylus brasiliensis (Rat hookworm).